A 459-amino-acid polypeptide reads, in one-letter code: tRNA(Ile2) 2-agmatinylcytidine synthetase TiaS (459 aa).

The segment at residues 282–360 is a DNA-binding region (OB); sequence VRVRVWVASI…TINLEKLHII (79 aa).

Belongs to the TiaS family.

The protein resides in the cytoplasm. The catalysed reaction is cytidine(34) in tRNA(Ile2) + agmatine + ATP + H2O = 2-agmatinylcytidine(34) in tRNA(Ile2) + AMP + 2 phosphate + 2 H(+). In terms of biological role, ATP-dependent agmatine transferase that catalyzes the formation of 2-agmatinylcytidine (agm2C) at the wobble position (C34) of tRNA(Ile2), converting the codon specificity from AUG to AUA. The sequence is that of tRNA(Ile2) 2-agmatinylcytidine synthetase TiaS from Staphylothermus marinus (strain ATCC 43588 / DSM 3639 / JCM 9404 / F1).